Consider the following 397-residue polypeptide: Probable tRNA sulfurtransferase (397 aa).

One can recognise a THUMP domain in the interval 60 to 165 (HPVIEKLQEV…KEGTYITAYD (106 aa)). Residues 183 to 184 (ML), 208 to 209 (HF), R265, G287, and Q296 each bind ATP.

The protein belongs to the ThiI family.

Its subcellular location is the cytoplasm. It catalyses the reaction [ThiI sulfur-carrier protein]-S-sulfanyl-L-cysteine + a uridine in tRNA + 2 reduced [2Fe-2S]-[ferredoxin] + ATP + H(+) = [ThiI sulfur-carrier protein]-L-cysteine + a 4-thiouridine in tRNA + 2 oxidized [2Fe-2S]-[ferredoxin] + AMP + diphosphate. The catalysed reaction is [ThiS sulfur-carrier protein]-C-terminal Gly-Gly-AMP + S-sulfanyl-L-cysteinyl-[cysteine desulfurase] + AH2 = [ThiS sulfur-carrier protein]-C-terminal-Gly-aminoethanethioate + L-cysteinyl-[cysteine desulfurase] + A + AMP + 2 H(+). It functions in the pathway cofactor biosynthesis; thiamine diphosphate biosynthesis. In terms of biological role, catalyzes the ATP-dependent transfer of a sulfur to tRNA to produce 4-thiouridine in position 8 of tRNAs, which functions as a near-UV photosensor. Also catalyzes the transfer of sulfur to the sulfur carrier protein ThiS, forming ThiS-thiocarboxylate. This is a step in the synthesis of thiazole, in the thiamine biosynthesis pathway. The sulfur is donated as persulfide by IscS. The polypeptide is Probable tRNA sulfurtransferase (Anoxybacillus flavithermus (strain DSM 21510 / WK1)).